The chain runs to 278 residues: Putative transposase for insertion sequence element IS986/IS6110 (278 aa).

The region spanning 101-268 (GPPAPNRLWV…VPPVELEAAY (168 aa)) is the Integrase catalytic domain.

Functionally, involved in the transposition of the insertion sequence. This chain is Putative transposase for insertion sequence element IS986/IS6110, found in Mycobacterium bovis (strain ATCC BAA-935 / AF2122/97).